Here is a 217-residue protein sequence, read N- to C-terminus: UPF0502 protein VFMJ11_A0613 (217 aa).

Belongs to the UPF0502 family.

In Aliivibrio fischeri (strain MJ11) (Vibrio fischeri), this protein is UPF0502 protein VFMJ11_A0613.